The chain runs to 789 residues: Fibrinogen alpha chain (789 aa).

The signal sequence occupies residues M1–T19. Residue S46 is modified to Phosphoserine. The stretch at C69–D554 forms a coiled coil. Basic and acidic residues-rich tracts occupy residues E263–F287 and K384–V396. Residues E263–D420 are disordered. The segment covering T397–V416 has biased composition (polar residues). A disulfide bridge links C408 with C438. S447 carries the phosphoserine modification. The residue at position 504 (P504) is a 4-hydroxyproline; by P4HA1. Residues A526 to N541 are compositionally biased toward basic and acidic residues. The tract at residues A526–C555 is disordered. The region spanning R546–V787 is the Fibrinogen C-terminal domain. N-linked (GlcNAc...) asparagine glycosylation occurs at N609. D714, D716, W718, and E720 together coordinate Ca(2+). C722 and C735 are oxidised to a cystine.

In terms of assembly, heterohexamer; disulfide linked. Contains 2 sets of 3 non-identical chains (alpha, beta and gamma). The 2 heterotrimers are in head to head conformation with the N-termini in a small central domain. Post-translationally, conversion of fibrinogen to fibrin is triggered by thrombin, which cleaves fibrinopeptides A and B from alpha and beta chains, and thus exposes the N-terminal polymerization sites responsible for the formation of the soft clot. The soft clot is converted into the hard clot by factor XIIIA which catalyzes the epsilon-(gamma-glutamyl)lysine cross-linking between gamma chains (stronger) and between alpha chains (weaker) of different monomers. Forms F13A-mediated cross-links between a glutamine and the epsilon-amino group of a lysine residue, forming fibronectin-fibrinogen heteropolymers. In terms of processing, phosphorylated by FAM20C in the extracellular medium. Expressed in liver.

It localises to the secreted. Its function is as follows. Cleaved by the protease thrombin to yield monomers which, together with fibrinogen beta (FGB) and fibrinogen gamma (FGG), polymerize to form an insoluble fibrin matrix. Fibrin has a major function in hemostasis as one of the primary components of blood clots. In addition, functions during the early stages of wound repair to stabilize the lesion and guide cell migration during re-epithelialization. Was originally thought to be essential for platelet aggregation, based on in vitro studies using anticoagulated blood. However, subsequent studies have shown that it is not absolutely required for thrombus formation in vivo. Enhances expression of SELP in activated platelets via an ITGB3-dependent pathway. Maternal fibrinogen is essential for successful pregnancy. Fibrin deposition is also associated with infection, where it protects against IFNG-mediated hemorrhage. May also facilitate the immune response via both innate and T-cell mediated pathways. This is Fibrinogen alpha chain from Mus musculus (Mouse).